The sequence spans 275 residues: Formamidopyrimidine-DNA glycosylase (275 aa).

Pro-2 (schiff-base intermediate with DNA) is an active-site residue. Residue Glu-3 is the Proton donor of the active site. Catalysis depends on Lys-58, which acts as the Proton donor; for beta-elimination activity. DNA-binding residues include His-91 and Arg-110. The FPG-type zinc-finger motif lies at 238-272 (QVYGQTGKPCPRCGQAIVKLKVGGRGTHICPKCQK). Arg-262 serves as the catalytic Proton donor; for delta-elimination activity.

The protein belongs to the FPG family. Monomer. It depends on Zn(2+) as a cofactor.

It carries out the reaction Hydrolysis of DNA containing ring-opened 7-methylguanine residues, releasing 2,6-diamino-4-hydroxy-5-(N-methyl)formamidopyrimidine.. The catalysed reaction is 2'-deoxyribonucleotide-(2'-deoxyribose 5'-phosphate)-2'-deoxyribonucleotide-DNA = a 3'-end 2'-deoxyribonucleotide-(2,3-dehydro-2,3-deoxyribose 5'-phosphate)-DNA + a 5'-end 5'-phospho-2'-deoxyribonucleoside-DNA + H(+). Involved in base excision repair of DNA damaged by oxidation or by mutagenic agents. Acts as a DNA glycosylase that recognizes and removes damaged bases. Has a preference for oxidized purines, such as 7,8-dihydro-8-oxoguanine (8-oxoG). Has AP (apurinic/apyrimidinic) lyase activity and introduces nicks in the DNA strand. Cleaves the DNA backbone by beta-delta elimination to generate a single-strand break at the site of the removed base with both 3'- and 5'-phosphates. In Streptococcus pyogenes serotype M6 (strain ATCC BAA-946 / MGAS10394), this protein is Formamidopyrimidine-DNA glycosylase.